The sequence spans 65 residues: Hainantoxin-X-3 (65 aa).

An N-terminal signal peptide occupies residues methionine 1–alanine 20. The propeptide occupies glutamate 21–arginine 37. Intrachain disulfides connect cysteine 46-cysteine 59 and cysteine 55-cysteine 64.

It belongs to the neurotoxin 36 family. 02 subfamily. In terms of tissue distribution, expressed by the venom gland.

The protein localises to the secreted. Functionally, reversibly blocks N-type calcium channels (Cav2.2/CACNA1B) in rat dorsal root ganglion cells. Elicits no toxic symptoms in either vertebrates or invertebrates during a period of 48 hours post-injection, when it was assayed in vivo by direct injection into mice and cockroaches. In Cyriopagopus hainanus (Chinese bird spider), this protein is Hainantoxin-X-3.